A 419-amino-acid chain; its full sequence is MTTQLEQAWELAKQRFAAVGIDVEEALRQLDRLPVSMHCWQGDDVAGFENPEGSLTGGIQSTGNYPGKARNATELRADLEQALRLIPGPKRLNLHAIYLESDTPVARDQIKPEHFKNWVEWAKANRLGLDFNPTCFSHPLSADGFTLSHPDAKIRQFWIDHCKASRRVSAYFGEQLGTPSVMNIWIPDGMKDITVDRLAPRQRLLEALDEVISEKFDPAHHIDAVESKLFGIGAESYTVGSNEFYMGYATSRQTALCLDAGHFHPTEVISDKISAAMLYVPRLLLHVSRPVRWDSDHVVLLDDETQAIASEIVRHNLFDRVHIGLDFFDASINRVAAWVIGTRNMKKALLRALLEPTDQLRQLEASGDYTARLAMLEEQKSLPWQAVWEMYCQRHDTPAGSQWLDSVRTYEKEILSKRS.

Mn(2+) is bound by residues His262, Asp294, and Asp296.

It belongs to the rhamnose isomerase family. In terms of assembly, homotetramer. The cofactor is Mn(2+).

The protein resides in the cytoplasm. The enzyme catalyses L-rhamnopyranose = L-rhamnulose. It functions in the pathway carbohydrate degradation; L-rhamnose degradation; glycerone phosphate from L-rhamnose: step 1/3. Its function is as follows. Catalyzes the interconversion of L-rhamnose and L-rhamnulose. The sequence is that of L-rhamnose isomerase from Salmonella typhi.